A 246-amino-acid polypeptide reads, in one-letter code: Pyridoxine 5'-phosphate synthase (246 aa).

Asparagine 12 contacts 3-amino-2-oxopropyl phosphate. Residue 14–15 (DH) participates in 1-deoxy-D-xylulose 5-phosphate binding. Arginine 23 is a 3-amino-2-oxopropyl phosphate binding site. Residue histidine 48 is the Proton acceptor of the active site. Residues arginine 50 and histidine 55 each coordinate 1-deoxy-D-xylulose 5-phosphate. The active-site Proton acceptor is glutamate 75. Threonine 105 is a binding site for 1-deoxy-D-xylulose 5-phosphate. Residue histidine 196 is the Proton donor of the active site. 3-amino-2-oxopropyl phosphate-binding positions include glycine 197 and 218-219 (GH).

It belongs to the PNP synthase family. In terms of assembly, homooctamer; tetramer of dimers.

Its subcellular location is the cytoplasm. The catalysed reaction is 3-amino-2-oxopropyl phosphate + 1-deoxy-D-xylulose 5-phosphate = pyridoxine 5'-phosphate + phosphate + 2 H2O + H(+). It participates in cofactor biosynthesis; pyridoxine 5'-phosphate biosynthesis; pyridoxine 5'-phosphate from D-erythrose 4-phosphate: step 5/5. Functionally, catalyzes the complicated ring closure reaction between the two acyclic compounds 1-deoxy-D-xylulose-5-phosphate (DXP) and 3-amino-2-oxopropyl phosphate (1-amino-acetone-3-phosphate or AAP) to form pyridoxine 5'-phosphate (PNP) and inorganic phosphate. The polypeptide is Pyridoxine 5'-phosphate synthase (Pseudomonas putida (strain ATCC 47054 / DSM 6125 / CFBP 8728 / NCIMB 11950 / KT2440)).